A 506-amino-acid chain; its full sequence is GTPase Der (506 aa).

2 consecutive EngA-type G domains span residues 3–166 and 218–391; these read PVVA…GEQL and IKIA…ACAT. Residues 9 to 16, 56 to 60, 118 to 121, 224 to 231, 271 to 275, and 336 to 339 each bind GTP; these read GRPNVGKS, DTGGI, NKTD, DTAGV, and NKWD. The 85-residue stretch at 392-476 folds into the KH-like domain; the sequence is QKTSTSMLTR…PIRIQFQEGN (85 aa).

It belongs to the TRAFAC class TrmE-Era-EngA-EngB-Septin-like GTPase superfamily. EngA (Der) GTPase family. Associates with the 50S ribosomal subunit.

GTPase that plays an essential role in the late steps of ribosome biogenesis. The chain is GTPase Der from Actinobacillus pleuropneumoniae serotype 3 (strain JL03).